Here is a 156-residue protein sequence, read N- to C-terminus: Small ribosomal subunit protein uS7 (156 aa).

This sequence belongs to the universal ribosomal protein uS7 family. In terms of assembly, part of the 30S ribosomal subunit. Contacts proteins S9 and S11.

In terms of biological role, one of the primary rRNA binding proteins, it binds directly to 16S rRNA where it nucleates assembly of the head domain of the 30S subunit. Is located at the subunit interface close to the decoding center, probably blocks exit of the E-site tRNA. The polypeptide is Small ribosomal subunit protein uS7 (Teredinibacter turnerae (strain ATCC 39867 / T7901)).